We begin with the raw amino-acid sequence, 152 residues long: Deoxyuridine 5'-triphosphate nucleotidohydrolase (152 aa).

Substrate is bound by residues 71–73 (RSG), asparagine 84, 88–90 (LID), and methionine 98.

The protein belongs to the dUTPase family. Mg(2+) serves as cofactor.

It carries out the reaction dUTP + H2O = dUMP + diphosphate + H(+). Its pathway is pyrimidine metabolism; dUMP biosynthesis; dUMP from dCTP (dUTP route): step 2/2. Its function is as follows. This enzyme is involved in nucleotide metabolism: it produces dUMP, the immediate precursor of thymidine nucleotides and it decreases the intracellular concentration of dUTP so that uracil cannot be incorporated into DNA. The polypeptide is Deoxyuridine 5'-triphosphate nucleotidohydrolase (Shewanella sp. (strain ANA-3)).